The chain runs to 423 residues: Deferrochelatase (423 aa).

A signal peptide (tat-type signal) is located at residues 1 to 35; sequence MQYKDENGVNEPSRRRLLKVIGALALAGSCPVAHA. 236-238 contributes to the heme b binding site; sequence GTA. Protoporphyrin IX contacts are provided by residues 236 to 238 and Arg296; that span reads GTA. Residues His329, 334 to 336, and Arg347 contribute to the heme b site; that span reads NPR.

In terms of assembly, homodimer. Part of a ferrous iron transporter composed of EfeU, EfeO and EfeB. However, this EfeUOB tripartite iron transporter is defective in E.coli strain K12 due to a frameshift mutation in EfeU. Requires heme b as cofactor. In terms of processing, exported by the Tat system. The position of the signal peptide cleavage has been experimentally proven. Can also be exported by the Sec system.

Its subcellular location is the periplasm. It catalyses the reaction heme b + 2 H(+) = protoporphyrin IX + Fe(2+). Involved in the recovery of exogenous heme iron. Extracts iron from heme while preserving the protoporphyrin ring intact. Also displays peroxidase activity on guaiacol in vitro. This Escherichia coli (strain K12) protein is Deferrochelatase (efeB).